A 107-amino-acid chain; its full sequence is U1-lycotoxin-Ls1v (107 aa).

Residues 1 to 20 (MMKVLVVVALLVTLISYSSS) form the signal peptide. A propeptide spanning residues 21 to 41 (EGIDDLEADELLSLTANEQTR) is cleaved from the precursor. Disulfide bonds link C44-C59, C51-C68, C58-C86, and C70-C84.

Belongs to the neurotoxin 19 (CSTX) family. 04 (U1-Lctx) subfamily. In terms of tissue distribution, expressed by the venom gland.

Its subcellular location is the secreted. The protein is U1-lycotoxin-Ls1v of Lycosa singoriensis (Wolf spider).